Reading from the N-terminus, the 712-residue chain is Serrate RNA effector molecule homolog (712 aa).

3 disordered regions span residues 1–80, 214–256, and 620–712; these read MVDS…DSIY, ADIK…TEKS, and QRPV…DDIP. Composition is skewed to basic and acidic residues over residues 8-26 and 34-54; these read GDRR…DYRR and YDNK…SRGD. Polar residues predominate over residues 65–79; the sequence is RSGNGSDLPTESDSI. Over residues 214-236 the composition is skewed to basic and acidic residues; that stretch reads ADIKKDENGNGTEQPKEEPEVKQ. The segment covering 240–251 has biased composition (acidic residues); the sequence is ATEELEEGAIED. 2 stretches are compositionally biased toward basic and acidic residues: residues 621 to 637 and 645 to 655; these read RPVD…DHRG and GYGRERDDDRG. Positions 656–668 are enriched in gly residues; that stretch reads PGGGGRNSFGGGG.

The protein belongs to the ARS2 family.

The protein localises to the nucleus. Functionally, acts as a mediator between the cap-binding complex (CBC) and the primary microRNAs (miRNAs) processing machinery. Contributes to the stability and delivery of capped primary miRNA transcripts to the primary miRNA processing complex, thereby playing a role in RNA-mediated gene silencing (RNAi) by miRNAs. In Caenorhabditis elegans, this protein is Serrate RNA effector molecule homolog.